The primary structure comprises 177 residues: Coatomer subunit zeta-1 (177 aa).

Residue Met-1 is modified to N-acetylmethionine.

The protein belongs to the adaptor complexes small subunit family. In terms of assembly, oligomeric complex that consists of at least the alpha, beta, beta', gamma, delta, epsilon and zeta subunits.

It localises to the cytoplasm. Its subcellular location is the golgi apparatus membrane. It is found in the cytoplasmic vesicle. The protein resides in the COPI-coated vesicle membrane. The coatomer is a cytosolic protein complex that binds to dilysine motifs and reversibly associates with Golgi non-clathrin-coated vesicles, which further mediate biosynthetic protein transport from the ER, via the Golgi up to the trans Golgi network. Coatomer complex is required for budding from Golgi membranes, and is essential for the retrograde Golgi-to-ER transport of dilysine-tagged proteins. The zeta subunit may be involved in regulating the coat assembly and, hence, the rate of biosynthetic protein transport due to its association-dissociation properties with the coatomer complex. This is Coatomer subunit zeta-1 (COPZ1) from Homo sapiens (Human).